The chain runs to 326 residues: Microtubule-associated protein RP/EB family member 2 (326 aa).

Position 9 is a phosphoserine (S9). One can recognise a Calponin-homology (CH) domain in the interval 56 to 158; the sequence is TMSRHDIIAW…FIQWFKKFYD (103 aa). Y166 is subject to Phosphotyrosine. Disordered regions lie at residues 170 to 239 and 297 to 326; these read EARQ…DKDL and YASD…QEEY. The DCTN1-binding stretch occupies residues 186–326; it reads QIFNLPKKSH…DQQPQQQEEY (141 aa). Residues 199–233 show a composition bias toward low complexity; sequence SPTAGAAKSSPAAKPGSTPSRPSSAKRASSSGSAS. Phosphoserine is present on residues S218 and S235. One can recognise an EB1 C-terminal domain in the interval 235-305; that stretch reads SDKDLETQVI…LYASDEQEGQ (71 aa). The segment at 258 to 301 is APC-binding; the sequence is EGVEKERDFYFGKLREIELLCQEHGQENDDLVQRLMEVLYASDE. Acidic residues predominate over residues 300–312; the sequence is DEQEGQTEEPEVE. The span at 317 to 326 shows a compositional bias: low complexity; that stretch reads DQQPQQQEEY.

It belongs to the MAPRE family. As to quaternary structure, interacts with DCTN1. Interacts with APC (via C-terminal). Interacts with monomeric and polymerized tubulin. Interacts with SLAIN1. Interacts (via the N-terminal region) with BAG1. Interacts with ASB14. Interacts with HAX1; this interaction is essential for epidermal cell migration. Post-translationally, phosphorylated at Ser-235 by CK2 leading to enhanced cell adhesion. Phosphorylated by CDK1 and AURKB during mitosis reduces the binding affinity of MAPRE2 for microtubules. Ubiquitinated in an ASB14-dependent manner; leading to proteasomal degradation.

The protein localises to the cytoplasm. It is found in the cytoskeleton. Adapter protein that is involved in microtubule polymerization, and spindle function by stabilizing microtubules and anchoring them at centrosomes. Therefore, ensures mitotic progression and genome stability. Acts as a central regulator of microtubule reorganization in apico-basal epithelial differentiation. Plays a role during oocyte meiosis by regulating microtubule dynamics. Participates in neurite growth by interacting with plexin B3/PLXNB3 and microtubule reorganization during apico-basal epithelial differentiation. Also plays an essential role for cell migration and focal adhesion dynamics. Mechanistically, recruits HAX1 to microtubules in order to regulate focal adhesion dynamics. In Rattus norvegicus (Rat), this protein is Microtubule-associated protein RP/EB family member 2 (Mapre2).